The primary structure comprises 179 residues: Large ribosomal subunit protein uL6 (179 aa).

It belongs to the universal ribosomal protein uL6 family. As to quaternary structure, part of the 50S ribosomal subunit.

Its function is as follows. This protein binds to the 23S rRNA, and is important in its secondary structure. It is located near the subunit interface in the base of the L7/L12 stalk, and near the tRNA binding site of the peptidyltransferase center. This is Large ribosomal subunit protein uL6 from Chlorobium chlorochromatii (strain CaD3).